Here is a 638-residue protein sequence, read N- to C-terminus: LIM domain kinase 2 (638 aa).

2 consecutive LIM zinc-binding domains span residues 12 to 63 (CQGC…CHKD) and 72 to 124 (CHGC…CGKC). The 88-residue stretch at 152–239 (HISMPATTEG…TLQLLIEHDP (88 aa)) folds into the PDZ domain. Positions 280-304 (RRRSLRRSNSISKSPGPSSPKEPLL) are disordered. A compositionally biased stretch (low complexity) spans 286–304 (RSNSISKSPGPSSPKEPLL). Phosphoserine is present on residues Ser-293 and Ser-298. The 278-residue stretch at 331–608 (LIHGEVLGKG…DFFEALSLYL (278 aa)) folds into the Protein kinase domain. Residues 337 to 345 (LGKGFFGQA) and Asn-360 contribute to the ATP site. Residue Asp-451 is part of the active site. The residue at position 505 (Thr-505) is a Phosphothreonine; by ROCK1 and CDC42BP.

The protein belongs to the protein kinase superfamily. TKL Ser/Thr protein kinase family. Binds ROCK1 and MARF1. Interacts with NISCH. Post-translationally, phosphorylated on serine and/or threonine residues by ROCK1.

It localises to the cytoplasm. The protein localises to the cytoskeleton. Its subcellular location is the spindle. It is found in the microtubule organizing center. The protein resides in the centrosome. The enzyme catalyses L-seryl-[protein] + ATP = O-phospho-L-seryl-[protein] + ADP + H(+). It catalyses the reaction L-threonyl-[protein] + ATP = O-phospho-L-threonyl-[protein] + ADP + H(+). In terms of biological role, serine/threonine-protein kinase that plays an essential role in the regulation of actin filament dynamics. Acts downstream of several Rho family GTPase signal transduction pathways. Involved in astral microtubule organization and mitotic spindle orientation during early stages of mitosis by mediating phosphorylation of TPPP. Displays serine/threonine-specific phosphorylation of myelin basic protein and histone (MBP) in vitro. Suppresses ciliogenesis via multiple pathways; phosphorylation of CFL1, suppression of directional trafficking of ciliary vesicles to the ciliary base, and by facilitating YAP1 nuclear localization where it acts as a transcriptional corepressor of the TEAD4 target genes AURKA and PLK1. This chain is LIM domain kinase 2 (LIMK2), found in Bos taurus (Bovine).